The chain runs to 914 residues: Solute carrier family 12 member 9 (914 aa).

At 1–36 the chain is on the cytoplasmic side; it reads MASENSPLLAYRLLGEEGAAFPPNGAGGSGVASARK. The residue at position 6 (serine 6) is a Phosphoserine. A helical transmembrane segment spans residues 37-57; that stretch reads LSTFLGVVVPTVLSMFSIVVF. Residues 58–72 are Extracellular-facing; sequence LRIGFVVGHAGLLQA. A helical membrane pass occupies residues 73 to 93; it reads LAMLLVAYVILALTVLSVCAI. Residues 94–119 lie on the Cytoplasmic side of the membrane; sequence ATNGAVRGGGAYFMISRTLGPEVGGS. Residues 120 to 140 form a helical membrane-spanning segment; it reads IGLMFYLANVCGCAVSLLGLV. The Extracellular segment spans residues 141 to 167; that stretch reads ESILDVFGADVTGSSGIKVLPQGYGWN. A helical membrane pass occupies residues 168–188; the sequence is LLYGSLLLGLVGGVCALGAGL. Residues 189 to 193 are Cytoplasmic-facing; that stretch reads YARAS. A helical membrane pass occupies residues 194–214; it reads FLTFLLVSGSLASVLVSFVAV. Residues 215–262 lie on the Extracellular side of the membrane; it reads GPRNITLAPRPGTNGSSVPPRHGHFTGFNGSTLKDNLGAGYAEDYTTG. Residues asparagine 218, asparagine 228, and asparagine 243 are each glycosylated (N-linked (GlcNAc...) asparagine). The helical transmembrane segment at 263-283 threads the bilayer; sequence AMMTFASVFAVLFNGCTGIMA. Residues 284–297 lie on the Cytoplasmic side of the membrane; the sequence is GANMSGELKDPSRA. Residues 298 to 318 traverse the membrane as a helical segment; it reads IPLGTIIAVAYTFFIYILLFF. The Extracellular segment spans residues 319–338; it reads LSSFTCDRALLQGDYGFFRD. The helical transmembrane segment at 339-359 threads the bilayer; that stretch reads ISLWPPLVLIGIYATALSASM. At 360 to 376 the chain is on the cytoplasmic side; that stretch reads SSLIGASRILHALAQDD. Residues 377–399 traverse the membrane as a helical segment; that stretch reads LFGVILAPAKVVSGGGNPWGAVL. Residues 400–416 are Extracellular-facing; that stretch reads YSWGLVQLVLLAGKLNT. The helical transmembrane segment at 417-437 threads the bilayer; sequence LAAVVTVFYLVAYAAVDLSCL. Over 438-466 the chain is Cytoplasmic; that stretch reads SLEWASAPNFRPTFSLFSWHTCLLGVASC. The helical transmembrane segment at 467–487 threads the bilayer; it reads LLMMFLISPGAAGGSLLLMGL. Residues 488 to 740 are Extracellular-facing; the sequence is LSALLTARGG…LLRPRGGPGY (253 aa). The interval 645 to 678 is disordered; that stretch reads PAFSEPAEGTREGGSPALSTLFPPPRAPGSPRAL. Residues 741 to 761 traverse the membrane as a helical segment; the sequence is VDVCGLFLLQMATILSMVPAW. At 762-914 the chain is on the cytoplasmic side; that stretch reads HSARLRIFLC…GVTPVTCTDL (153 aa). Residues 843-864 are disordered; that stretch reads QQGRGTGGGPGGPEGRDGEEGP. The segment covering 846–855 has biased composition (gly residues); it reads RGTGGGPGGP.

Belongs to the SLC12A transporter family. As to quaternary structure, interacts with SLC12A1.

The protein localises to the cell membrane. The protein resides in the lysosome membrane. In terms of biological role, may be an inhibitor of SLC12A1. Seems to correspond to a subunit of a multimeric transport system and thus, additional subunits may be required for its function. May play a role in lysosomal ion flux and osmoregulation. The sequence is that of Solute carrier family 12 member 9 (Slc12a9) from Rattus norvegicus (Rat).